We begin with the raw amino-acid sequence, 1100 residues long: cGMP-inhibited 3',5'-cyclic phosphodiesterase 3B (1100 aa).

Positions 1–11 (MRKDERERDAP) are enriched in basic and acidic residues. Residues 1 to 28 (MRKDERERDAPAMRSPPPPPASAASPPE) form an interaction with RAPGEF3 region. Residues 1–29 (MRKDERERDAPAMRSPPPPPASAASPPES) are disordered. Phosphoserine is present on serine 15. A run of 6 helical transmembrane segments spans residues 69–89 (AGARLSLGVLAAFVLAALLGA), 110–130 (LSLSPLFSIACAFFFLTCFLT), 140–160 (AGSWWLLALPACCYLGDFAAW), 170–190 (PAAAGRLCLVLSCVGLLTLAP), 198–218 (VLVLLFAGLVWWVSFSGLGAL), and 225–245 (LLSCLVGGAGCLLALGLDHFF). Serine 273 bears the Phosphoserine; by PKB/AKT1 or PKB/AKT2 mark. Phosphoserine occurs at positions 274 and 421. 2 disordered regions span residues 400-423 (RKLHKGLSGRTSFPTPQLRRSSGA) and 570-590 (EPDGTDHPSEKSGEEDSSVFS). Residues 408 to 423 (GRTSFPTPQLRRSSGA) show a composition bias toward polar residues. Residues 415–439 (PQLRRSSGASSLLTNEHCSRWDRSS) are interaction with PIK3R6. Residues 573 to 583 (GTDHPSEKSGE) are compositionally biased toward basic and acidic residues. One can recognise a PDEase domain in the interval 627–1061 (PNIDQEVSLD…KIWKEIIEEE (435 aa)). Histidine 713 acts as the Proton donor in catalysis. Residue histidine 713 coordinates AMP. Residues histidine 717, histidine 797, aspartate 798, and aspartate 913 each contribute to the Mg(2+) site. Residues aspartate 798, aspartate 913, and glutamine 964 each contribute to the AMP site. Residues 993 to 1024 (EEGDDTESDDDDDDDDGDGGEELDSDDEETED) show a composition bias toward acidic residues. The segment at 993-1033 (EEGDDTESDDDDDDDDGDGGEELDSDDEETEDNLNPKPQRR) is disordered. Positions 1044-1079 (MHHLTENHKIWKEIIEEEEEKCKAEGNKLQVDNASL) form a coiled coil.

This sequence belongs to the cyclic nucleotide phosphodiesterase family. PDE3 subfamily. In terms of assembly, homodimer. Interacts with PIK3CG; regulates PDE3B activity and thereby cAMP levels in cells. Interacts with RAPGEF3 and PIK3R6; form a signaling complex that regulates phosphatidylinositol 3-kinase gamma in angiogenesis. Interacts with ABHD15; this interaction regulates PDE3B's stability and expression and, thereby, impacts the antilipolytic action of insulin. Mg(2+) serves as cofactor. Mn(2+) is required as a cofactor. In terms of processing, phosphorylation at Ser-273 mediates insulin-induced activation of PDE3B. Abundant in adipose tissues.

The protein resides in the membrane. The enzyme catalyses a nucleoside 3',5'-cyclic phosphate + H2O = a nucleoside 5'-phosphate + H(+). The catalysed reaction is 3',5'-cyclic AMP + H2O = AMP + H(+). It carries out the reaction 3',5'-cyclic GMP + H2O = GMP + H(+). Its activity is regulated as follows. Inhibited by cGMP. Functionally, cyclic nucleotide phosphodiesterase with a dual-specificity for the second messengers cAMP and cGMP, which are key regulators of many important physiological processes. Regulates angiogenesis by inhibiting the cAMP-dependent guanine nucleotide exchange factor RAPGEF3 and downstream phosphatidylinositol 3-kinase gamma-mediated signaling. Controls cardiac contractility by reducing cAMP concentration in cardiocytes. The chain is cGMP-inhibited 3',5'-cyclic phosphodiesterase 3B from Mus musculus (Mouse).